The primary structure comprises 388 residues: Putative membrane protein MJ1562 (388 aa).

6 consecutive transmembrane segments (helical) span residues 22-42 (FLML…ATNV), 219-239 (SQSF…IIYF), 246-266 (IMPL…MGLL), 273-293 (ATAG…IHLM), 320-340 (AVMA…LAPL), and 351-371 (ALGI…LIVI).

It belongs to the resistance-nodulation-cell division (RND) (TC 2.A.6) family. MmpL subfamily.

It is found in the cell membrane. The sequence is that of Putative membrane protein MJ1562 from Methanocaldococcus jannaschii (strain ATCC 43067 / DSM 2661 / JAL-1 / JCM 10045 / NBRC 100440) (Methanococcus jannaschii).